We begin with the raw amino-acid sequence, 971 residues long: Exportin-2 (971 aa).

An N-acetylmethionine modification is found at methionine 1. Residues 29 to 102 (AEKFLESVEG…KANIVHLMLS (74 aa)) enclose the Importin N-terminal domain. Serine 112 bears the Phosphoserine mark. 2 positions are modified to N6-acetyllysine: lysine 574 and lysine 824. Serine 931 carries the phosphoserine modification.

The protein belongs to the XPO2/CSE1 family. In terms of assembly, found in a complex with CSE1L/XPO2, Ran and KPNA2. Binds with high affinity to importin-alpha only in the presence of RanGTP. The complex is dissociated by the combined action of RanBP1 and RanGAP1. Interacts with CFTR. As to expression, detected in brain, placenta, ovary, testis and trachea (at protein level). Widely expressed. Highly expressed in testis and in proliferating cells.

The protein resides in the cytoplasm. It is found in the nucleus. Export receptor for importin-alpha. Mediates importin-alpha re-export from the nucleus to the cytoplasm after import substrates (cargos) have been released into the nucleoplasm. In the nucleus binds cooperatively to importin-alpha and to the GTPase Ran in its active GTP-bound form. Docking of this trimeric complex to the nuclear pore complex (NPC) is mediated through binding to nucleoporins. Upon transit of a nuclear export complex into the cytoplasm, disassembling of the complex and hydrolysis of Ran-GTP to Ran-GDP (induced by RANBP1 and RANGAP1, respectively) cause release of the importin-alpha from the export receptor. CSE1L/XPO2 then return to the nuclear compartment and mediate another round of transport. The directionality of nuclear export is thought to be conferred by an asymmetric distribution of the GTP- and GDP-bound forms of Ran between the cytoplasm and nucleus. The chain is Exportin-2 (CSE1L) from Homo sapiens (Human).